Here is a 472-residue protein sequence, read N- to C-terminus: 3-isopropylmalate dehydratase large subunit (472 aa).

Residues C347, C407, and C410 each coordinate [4Fe-4S] cluster.

It belongs to the aconitase/IPM isomerase family. LeuC type 1 subfamily. Heterodimer of LeuC and LeuD. [4Fe-4S] cluster is required as a cofactor.

It carries out the reaction (2R,3S)-3-isopropylmalate = (2S)-2-isopropylmalate. The protein operates within amino-acid biosynthesis; L-leucine biosynthesis; L-leucine from 3-methyl-2-oxobutanoate: step 2/4. Its function is as follows. Catalyzes the isomerization between 2-isopropylmalate and 3-isopropylmalate, via the formation of 2-isopropylmaleate. The chain is 3-isopropylmalate dehydratase large subunit from Bacillus licheniformis (strain ATCC 14580 / DSM 13 / JCM 2505 / CCUG 7422 / NBRC 12200 / NCIMB 9375 / NCTC 10341 / NRRL NRS-1264 / Gibson 46).